The chain runs to 319 residues: tRNA uridine(34) hydroxylase (319 aa).

Positions 127 to 221 (KQEDTVIIDA…YGKDPEVQGE (95 aa)) constitute a Rhodanese domain. Cys-181 serves as the catalytic Cysteine persulfide intermediate.

It belongs to the TrhO family.

It catalyses the reaction uridine(34) in tRNA + AH2 + O2 = 5-hydroxyuridine(34) in tRNA + A + H2O. Functionally, catalyzes oxygen-dependent 5-hydroxyuridine (ho5U) modification at position 34 in tRNAs. The sequence is that of tRNA uridine(34) hydroxylase from Bacillus cereus (strain ZK / E33L).